We begin with the raw amino-acid sequence, 353 residues long: Cyanuric acid amidohydrolase (353 aa).

The RU A stretch occupies residues 1–90; it reads MSSTALYTVP…NIFVRDERQY (90 aa). Residues Arg-49 and 69-70 each bind substrate; that span reads SG. An RU B region spans residues 96–231; it reads GLVTAVGRTR…CHILVVAESD (136 aa). Residue Lys-145 is part of the active site. Substrate-binding positions include Arg-177 and 214-215; that span reads SS. Ser-214 (nucleophile) is an active-site residue. Residues 237 to 353 form an RU C region; sequence LRAAHTAMRD…TANATGEASR (117 aa). Glu-275 provides a ligand contact to Mg(2+). Residues Arg-302 and 321–322 contribute to the substrate site; that span reads SG. Mg(2+) contacts are provided by Ala-324, Gln-327, Gly-328, Pro-329, and Gly-332.

It belongs to the cyclic amide hydrolase (CyAH) family. Homotetramer.

The catalysed reaction is cyanurate + H2O = 1-carboxybiuret + H(+). Its pathway is xenobiotic degradation; atrazine degradation; biuret from cyanurate: step 1/1. With respect to regulation, inhibited by barbituric acid. In terms of biological role, responsible for the hydrolysis of cyanuric acid, an intermediate formed during catabolism of s-triazine based compounds in herbicides such as atrazine and polymers such as melamine. Catalyzes the hydrolytic opening of the s-triazine ring of cyanuric acid (2,4,6-trihydroxy-s-triazine) to yield carbon dioxide and carboxybiuret, which spontaneously decarboxylates to biuret. Required for growth on melamine or cyanuric acid as sole nitrogen source. The polypeptide is Cyanuric acid amidohydrolase (Rhodococcus sp).